We begin with the raw amino-acid sequence, 907 residues long: HMG box transcription factor BBX (907 aa).

Over residues 1 to 19 (MKGSNRNKDHSTEGEGDGK) the composition is skewed to basic and acidic residues. Disordered regions lie at residues 1-24 (MKGS…PKRK), 37-80 (LDFS…EQRA), 152-185 (TTNK…PTPK), and 220-242 (TPEA…RQKS). Composition is skewed to acidic residues over residues 39–52 (FSEE…EEDI) and 61–75 (DGLE…DDES). Residues 80-148 (ARRPMNAFLL…AFMKANPGYR (69 aa)) constitute a DNA-binding region (HMG box). Residues 152 to 164 (TTNKPVKSPTPTV) show a composition bias toward polar residues. Ser-242 carries the post-translational modification Phosphoserine. A Glycyl lysine isopeptide (Lys-Gly) (interchain with G-Cter in SUMO2) cross-link involves residue Lys-384. Disordered regions lie at residues 435–483 (IIED…DIES), 495–612 (DWGV…SERS), and 628–672 (TSLR…KKFK). The span at 447-457 (KIKKKKKKNKL) shows a compositional bias: basic residues. Ser-476 and Ser-483 each carry phosphoserine. Basic and acidic residues-rich tracts occupy residues 496 to 506 (WGVDKLGETPR) and 534 to 550 (KKVS…ESRP). Lys-571 is covalently cross-linked (Glycyl lysine isopeptide (Lys-Gly) (interchain with G-Cter in SUMO2)). Residues 591–612 (KPEDSDCHRKTETCGSRKSERS) show a composition bias toward basic and acidic residues. Over residues 656–668 (ESWTFNQSGTSGS) the composition is skewed to polar residues. A Glycyl lysine isopeptide (Lys-Gly) (interchain with G-Cter in SUMO2) cross-link involves residue Lys-693. Phosphoserine is present on Ser-701. Disordered regions lie at residues 708-736 (KCVS…SGDK), 769-854 (NALS…SSTP), and 877-907 (VHRG…CADQ). A compositionally biased stretch (low complexity) spans 723 to 732 (SSESTKTSKG). Residues 772-783 (SIPNTPEPTTMQ) show a composition bias toward polar residues. Ser-789 carries the post-translational modification Phosphoserine. The segment covering 790–801 (QKRKARKTKITH) has biased composition (basic residues). Ser-811 is subject to Phosphoserine.

The protein resides in the nucleus. Transcription factor that is necessary for cell cycle progression from G1 to S phase. In Mus musculus (Mouse), this protein is HMG box transcription factor BBX (Bbx).